The following is a 1172-amino-acid chain: DNA-directed RNA polymerase subunit beta (1172 aa).

The protein belongs to the RNA polymerase beta chain family. The RNAP catalytic core consists of 2 alpha, 1 beta, 1 beta' and 1 omega subunit. When a sigma factor is associated with the core the holoenzyme is formed, which can initiate transcription.

It catalyses the reaction RNA(n) + a ribonucleoside 5'-triphosphate = RNA(n+1) + diphosphate. In terms of biological role, DNA-dependent RNA polymerase catalyzes the transcription of DNA into RNA using the four ribonucleoside triphosphates as substrates. The protein is DNA-directed RNA polymerase subunit beta of Thermosipho melanesiensis (strain DSM 12029 / CIP 104789 / BI429).